A 1531-amino-acid chain; its full sequence is Protein turtle (1531 aa).

At 1 to 858 (MGVCADLGSH…PARVKHKAIT (858 aa)) the chain is on the extracellular side. Positions 19-44 (QHNTEKSKEQQQQSQPLEIPEQRASK) are disordered. 5 Ig-like C2-type domains span residues 132–243 (PEDA…KNGT), 253–340 (PRFS…ARVI), 344–436 (GAVI…AYLS), 440–529 (PAKV…GVMD), and 536–624 (PAFT…MAVT). 5 disulfides stabilise this stretch: Cys150-Cys227, Cys275-Cys324, Cys366-Cys419, Cys462-Cys513, and Cys558-Cys611. Fibronectin type-III domains are found at residues 632–728 (QPHA…TLED) and 760–851 (PPRN…VPAR). The chain crosses the membrane as a helical span at residues 859–879 (AGVVGGILFFIVAIILSVCAV). The Cytoplasmic segment spans residues 880–1531 (KICNKRKRRK…QAMQQMESVC (652 aa)). Disordered stretches follow at residues 1248–1269 (EETR…VPLQ) and 1318–1395 (NLNL…SYPR). Over residues 1333 to 1349 (SPESRSSSSGFGSKNTS) the composition is skewed to low complexity. The segment covering 1380 to 1389 (QQAQGQTPHG) has biased composition (polar residues).

The protein belongs to the immunoglobulin superfamily. Turtle family. As to quaternary structure, interacts with bdl. Exclusively expressed in the central nervous system.

Its subcellular location is the membrane. In terms of biological role, essential protein that plays a role in the establishment of coordinated motor control. In the developing eye, involved in axonal targeting of the R7 photoreceptor. The sequence is that of Protein turtle (tutl) from Drosophila melanogaster (Fruit fly).